Here is a 101-residue protein sequence, read N- to C-terminus: Threonine-rich inner membrane protein GfcA (101 aa).

Residues 1 to 21 form the signal peptide; it reads MKHKLSAILMAFMLTTPAAFA. Topologically, residues 22 to 59 are cytoplasmic; the sequence is APEATNGTEATTGTTGTTTTTTGATTTATTTGGVAAGA. Positions 24–45 are disordered; that stretch reads EATNGTEATTGTTGTTTTTTGA. A helical membrane pass occupies residues 60–80; that stretch reads VGTATVVGVATAVGVATLAVV. The Periplasmic segment spans residues 81 to 101; it reads AANDSGDGGSHNTSTTTSTTR. The disordered stretch occupies residues 82–101; that stretch reads ANDSGDGGSHNTSTTTSTTR.

It is found in the cell inner membrane. This is Threonine-rich inner membrane protein GfcA (gfcA) from Escherichia coli (strain K12).